A 216-amino-acid chain; its full sequence is MNNMNVIIADDHPIVLFGIRKSLEQIEWVNVVGEFEDSTALINNLPKLDAHVLITDLSMPGDKYGDGITLIKYIKRHFPSLSIIVLTMNNNPAILSAVLDLDIEGIVLKQGAPTDLPKALAALQKGKKFTPESVSRLLEKISAGGYGDKRLSPKESEVLRLFAEGFLVTEIAKKLNRSIKTISSQKKSAMMKLGVENDIALLNYLSSVTLSPTDKE.

Residues 5–124 (NVIIADDHPI…DLPKALAALQ (120 aa)) form the Response regulatory domain. A 4-aspartylphosphate modification is found at aspartate 56. Residues 144 to 209 (GGYGDKRLSP…ALLNYLSSVT (66 aa)) form the HTH luxR-type domain. Positions 168-187 (VTEIAKKLNRSIKTISSQKK) form a DNA-binding region, H-T-H motif.

This sequence belongs to the RcsB family. Interacts with RcsD and RcsA. Phosphorylated and activated by RcsD.

Component of the Rcs signaling system, which controls transcription of numerous genes. RcsB is the response regulator that binds to regulatory DNA regions. Can function both in an RcsA-dependent or RcsA-independent manner. This Salmonella typhimurium (strain LT2 / SGSC1412 / ATCC 700720) protein is Transcriptional regulatory protein RcsB.